Here is a 118-residue protein sequence, read N- to C-terminus: uncharacterized protein (118 aa).

Transmembrane regions (helical) follow at residues 22-44, 54-71, and 78-99; these read IIAS…FSIA, LSPL…PVLR, and PILS…VEWL.

The protein localises to the cell membrane. This is an uncharacterized protein from Archaeoglobus fulgidus (strain ATCC 49558 / DSM 4304 / JCM 9628 / NBRC 100126 / VC-16).